The chain runs to 65 residues: Large ribosomal subunit protein bL35 (65 aa).

The disordered stretch occupies residues 1–47 (MPKIKTNRGAAKRFRKTASGKIKRNSAFTSHILTSKTRKRKRQLRSS). Residues 10-24 (AAKRFRKTASGKIKR) show a composition bias toward basic residues. Over residues 26 to 35 (SAFTSHILTS) the composition is skewed to polar residues.

Belongs to the bacterial ribosomal protein bL35 family.

This is Large ribosomal subunit protein bL35 from Geobacter metallireducens (strain ATCC 53774 / DSM 7210 / GS-15).